We begin with the raw amino-acid sequence, 745 residues long: uncharacterized protein (745 aa).

The 99-residue stretch at 158–256 folds into the HTH araC/xylS-type domain; it reads NQVCDYIELH…HQTPKQYRGD (99 aa). 2 DNA-binding regions (H-T-H motif) span residues 175-196 and 223-246; these read SELSEYVGWSESHLSKKFTESL and ITDIALQNGFSSAASFARTFKHFT.

This is an uncharacterized protein from Staphylococcus aureus (strain COL).